A 335-amino-acid polypeptide reads, in one-letter code: L-threo-3-deoxy-hexylosonate aldolase (335 aa).

Substrate is bound at residue 50–51 (SN). K175 acts as the Schiff-base intermediate with substrate in catalysis.

It belongs to the DapA family.

The enzyme catalyses 2-dehydro-3-deoxy-L-galactonate = L-glyceraldehyde + pyruvate. It participates in carbohydrate acid metabolism. Its function is as follows. Mediates the conversion of 2-dehydro-3-deoxy-L-galactonate to pyruvate and L-glyceraldehyde in D-galacturonate catabolic process. This Aspergillus niger protein is L-threo-3-deoxy-hexylosonate aldolase (gaaC).